The chain runs to 138 residues: Large ribosomal subunit protein bL17 (138 aa).

It belongs to the bacterial ribosomal protein bL17 family. Part of the 50S ribosomal subunit. Contacts protein L32.

The sequence is that of Large ribosomal subunit protein bL17 from Methylorubrum extorquens (strain CM4 / NCIMB 13688) (Methylobacterium extorquens).